Here is a 77-residue protein sequence, read N- to C-terminus: Conotoxin PnMKLT1-0122 (77 aa).

The first 22 residues, 1–22, serve as a signal peptide directing secretion; the sequence is MKLTCMMIVAVLFLTAWTFATA. The propeptide occupies 23 to 49; sequence EDPRNGLENLFSKAHHEMKNPEDSKLN. Cystine bridges form between cysteine 52/cysteine 67, cysteine 59/cysteine 71, and cysteine 66/cysteine 76.

It belongs to the conotoxin O1 superfamily. Expressed by the venom duct.

Its subcellular location is the secreted. This is Conotoxin PnMKLT1-0122 from Conus pennaceus (Feathered cone).